The following is a 457-amino-acid chain: GTPase Era, mitochondrial (457 aa).

Residues 1–18 (MAFRVSISTFGKSLRVRR) constitute a mitochondrion transit peptide. The region spanning 107–350 (KVLRVAIIGA…RYLVVGAKPG (244 aa)) is the Era-type G domain. The interval 115–122 (GAPNAGKS) is G1. 115-122 (GAPNAGKS) serves as a coordination point for GTP. The segment at 141–145 (HTTRA) is G2. Residues 162 to 165 (DTPG) are G3. GTP is bound by residues 162 to 166 (DTPGL) and 231 to 234 (NKVD). The tract at residues 231–234 (NKVD) is G4. Positions 270–290 (AERRTDREARTSGSGDEEKPG) are enriched in basic and acidic residues. The segment at 270-300 (AERRTDREARTSGSGDEEKPGGDVADGEGSE) is disordered. The tract at residues 328–330 (VSA) is G5. A KH type-2 domain is found at 376–457 (LLEYLPKEVP…KLRLSVKVKN (82 aa)).

This sequence belongs to the TRAFAC class TrmE-Era-EngA-EngB-Septin-like GTPase superfamily. Era GTPase family.

The protein resides in the mitochondrion matrix. The protein localises to the mitochondrion inner membrane. Functionally, probable GTPase that plays a role in the mitochondrial ribosomal small subunit assembly. Specifically binds the 12S mitochondrial rRNA (12S mt-rRNA) to a 33 nucleotide section delineating the 3' terminal stem-loop region. May act as a chaperone that protects the 12S mt-rRNA on the 28S mitoribosomal subunit during ribosomal small subunit assembly. The chain is GTPase Era, mitochondrial (eral1) from Salmo salar (Atlantic salmon).